We begin with the raw amino-acid sequence, 278 residues long: Shikimate dehydrogenase (NADP(+)) (278 aa).

Shikimate is bound by residues 19–21 (SRS) and threonine 66. The active-site Proton acceptor is lysine 70. Aspartate 82 lines the NADP(+) pocket. Shikimate contacts are provided by asparagine 91 and aspartate 107. NADP(+) contacts are provided by residues 133-137 (GAGGA), 157-162 (NRTRAK), and isoleucine 222. Tyrosine 224 contributes to the shikimate binding site. An NADP(+)-binding site is contributed by glycine 245.

The protein belongs to the shikimate dehydrogenase family. As to quaternary structure, homodimer.

The catalysed reaction is shikimate + NADP(+) = 3-dehydroshikimate + NADPH + H(+). The protein operates within metabolic intermediate biosynthesis; chorismate biosynthesis; chorismate from D-erythrose 4-phosphate and phosphoenolpyruvate: step 4/7. In terms of biological role, involved in the biosynthesis of the chorismate, which leads to the biosynthesis of aromatic amino acids. Catalyzes the reversible NADPH linked reduction of 3-dehydroshikimate (DHSA) to yield shikimate (SA). In Dinoroseobacter shibae (strain DSM 16493 / NCIMB 14021 / DFL 12), this protein is Shikimate dehydrogenase (NADP(+)).